We begin with the raw amino-acid sequence, 582 residues long: Proline--tRNA ligase (582 aa).

It belongs to the class-II aminoacyl-tRNA synthetase family. ProS type 1 subfamily. Homodimer.

Its subcellular location is the cytoplasm. It carries out the reaction tRNA(Pro) + L-proline + ATP = L-prolyl-tRNA(Pro) + AMP + diphosphate. Functionally, catalyzes the attachment of proline to tRNA(Pro) in a two-step reaction: proline is first activated by ATP to form Pro-AMP and then transferred to the acceptor end of tRNA(Pro). As ProRS can inadvertently accommodate and process non-cognate amino acids such as alanine and cysteine, to avoid such errors it has two additional distinct editing activities against alanine. One activity is designated as 'pretransfer' editing and involves the tRNA(Pro)-independent hydrolysis of activated Ala-AMP. The other activity is designated 'posttransfer' editing and involves deacylation of mischarged Ala-tRNA(Pro). The misacylated Cys-tRNA(Pro) is not edited by ProRS. The chain is Proline--tRNA ligase from Mycobacterium avium (strain 104).